A 1700-amino-acid polypeptide reads, in one-letter code: Rho guanine nucleotide exchange factor 28 (1700 aa).

Positions 288-335 are disordered; it reads TERATMPSGAAETEEEVRNLESGRSPSEEEEDGQLVKSQADGPSEQED. Residues Ser-312, Ser-314, and Ser-478 each carry the phosphoserine modification. The interval 483–525 is disordered; the sequence is VADSEEEGRSEPPICYAVGSQSSPRTGLPGGDELDSFDANTEP. Ser-623 carries the phosphoserine modification. Residues 651-698 form a Phorbol-ester/DAG-type zinc finger; that stretch reads RHQFVPGTFSGVLQCSGCDKTLLGKESLQCANCKANTHKGCKDTVPPC. Positions 709-720 are enriched in polar residues; the sequence is NKPQTILGSSSV. Disordered stretches follow at residues 709–761 and 774–799; these read NKPQ…VPGT and ESEG…GSSP. Low complexity predominate over residues 728-737; that stretch reads LSLHPSPSMP. Polar residues predominate over residues 774–783; the sequence is ESEGDSNSWR. One can recognise a DH domain in the interval 848 to 1043; sequence KRQDVIFELM…KDMIAAVDLK (196 aa). Residues 1085 to 1187 enclose the PH domain; the sequence is ALLHDGLVYW…WMRRIQQAVE (103 aa). The interval 1186–1207 is disordered; sequence VESCPEEEGGRTSESDEERRKA. Over residues 1193–1207 the composition is skewed to basic and acidic residues; the sequence is EGGRTSESDEERRKA. Residues 1294 to 1303 form an interaction with PTK2/FAK1; required for regulation of axonal branching and synapse formation region; that stretch reads DVSQPSEEGP. Positions 1369-1380 are mediates cytoplasmic retention and interaction with YWHAH; the sequence is IIQAIQNLTRLL. The interaction with microtubules stretch occupies residues 1421-1700; that stretch reads QEKSRYLEKH…DGAEENIVYL (280 aa). Positions 1473–1522 form a coiled coil; that stretch reads ERECQSQEELLLRHRSELDHQLQEYQQNLERLREGQRMVERERQRMRDQQ. The RNA-binding stretch occupies residues 1493–1524; sequence QLQEYQQNLERLREGQRMVERERQRMRDQQGL. Ser-1535 is subject to Phosphoserine. The tract at residues 1563–1576 is mediates cytoplasmic retention and interaction with MAPK8IP1; sequence FLNDAFTHMSLNTS. The disordered stretch occupies residues 1574-1598; the sequence is NTSNKPNPSGAPWDAHPPGGSHLDL. Residue Ser-1604 is modified to Phosphoserine. Positions 1612-1700 are disordered; sequence VSQPSDVNSE…DGAEENIVYL (89 aa). The span at 1613 to 1623 shows a compositional bias: polar residues; it reads SQPSDVNSELW. Positions 1633–1642 are enriched in basic and acidic residues; that stretch reads ARQESIKDSC. Positions 1647-1672 are enriched in polar residues; sequence DLNSFQTESPDPQDSNQRGPQPQTLI.

Homooligomer; forms cytoplasmic aggregates. Forms a complex with MAPK8 and MAPK8IP1. Interacts with RHOA. Interacts with microtubules. Interacts with YWHAE and YWHAH. Interacts with PTK2/FAK1. Interacts with NEFL. Interacts with CTNND2; prevents interaction with RHOA. Phosphorylated on tyrosine upon stimulation of cells by laminin.

The protein localises to the cytoplasm. Its subcellular location is the cell membrane. Its function is as follows. Functions as a RHOA-specific guanine nucleotide exchange factor regulating signaling pathways downstream of integrins and growth factor receptors. Functions in axonal branching, synapse formation and dendritic morphogenesis. Also functions in focal adhesion formation, cell motility and B-lymphocytes activation. May regulate NEFL expression and aggregation and play a role in apoptosis. In Rattus norvegicus (Rat), this protein is Rho guanine nucleotide exchange factor 28 (Arhgef28).